The chain runs to 96 residues: MSRISVENVKHVAHLARLAITDQEAEKFQKQLDAIVTFAEQLNELDTTDVKPTTHVLTMKNVMREDVPEKGLPVEEVLKNAPDHKDNQIRVPAVLE.

Belongs to the GatC family. As to quaternary structure, heterotrimer of A, B and C subunits.

It catalyses the reaction L-glutamyl-tRNA(Gln) + L-glutamine + ATP + H2O = L-glutaminyl-tRNA(Gln) + L-glutamate + ADP + phosphate + H(+). The catalysed reaction is L-aspartyl-tRNA(Asn) + L-glutamine + ATP + H2O = L-asparaginyl-tRNA(Asn) + L-glutamate + ADP + phosphate + 2 H(+). Its function is as follows. Allows the formation of correctly charged Asn-tRNA(Asn) or Gln-tRNA(Gln) through the transamidation of misacylated Asp-tRNA(Asn) or Glu-tRNA(Gln) in organisms which lack either or both of asparaginyl-tRNA or glutaminyl-tRNA synthetases. The reaction takes place in the presence of glutamine and ATP through an activated phospho-Asp-tRNA(Asn) or phospho-Glu-tRNA(Gln). This is Aspartyl/glutamyl-tRNA(Asn/Gln) amidotransferase subunit C from Bacillus anthracis (strain A0248).